The sequence spans 257 residues: Undecaprenyl-diphosphatase (257 aa).

Transmembrane regions (helical) follow at residues 4-24, 41-61, 74-94, 103-123, 133-153, 173-193, 209-229, and 236-256; these read LIRV…PISS, SVTL…VVFW, VIGL…TIKT, PLLA…LGRL, LGLG…LPGI, SVTF…VLAI, VLSI…KWLI, and RLHW…LLNL.

Belongs to the UppP family.

It localises to the cell inner membrane. It catalyses the reaction di-trans,octa-cis-undecaprenyl diphosphate + H2O = di-trans,octa-cis-undecaprenyl phosphate + phosphate + H(+). In terms of biological role, catalyzes the dephosphorylation of undecaprenyl diphosphate (UPP). Confers resistance to bacitracin. In Rhodopirellula baltica (strain DSM 10527 / NCIMB 13988 / SH1), this protein is Undecaprenyl-diphosphatase.